The following is a 768-amino-acid chain: Dual specificity calcium/calmodulin-dependent 3',5'-cyclic nucleotide phosphodiesterase 1C (768 aa).

At M1 the chain carries N-acetylmethionine. The calmodulin-binding stretch occupies residues 183-206 (EKPRFKSIVHAVQAGIFVERMYRR). The PDEase domain occupies 211 to 588 (VGLSYPPAVI…ERWRAKVPKE (378 aa)). The Proton donor role is filled by H288. Residues H292, H328, D329, and D436 each contribute to the Zn(2+) site. D329 contacts Mg(2+). Disordered regions lie at residues 513-557 (LIDE…INNS) and 584-719 (KVPK…PPLR). Polar residues-rich tracts occupy residues 516-536 (ETSQ…INSS) and 543-557 (VKSS…INNS). Positions 584–614 (KVPKEEKAKKEAEEKARLAAEEKQKEMEAKS) are enriched in basic and acidic residues. Residues 631 to 641 (ETKGQVNGTRT) are compositionally biased toward polar residues. 2 stretches are compositionally biased toward basic and acidic residues: residues 642 to 659 (SKGD…KAGE) and 665 to 692 (DLKD…DGTK). Low complexity predominate over residues 698-712 (SPAPSTSSTSRLTLP).

Belongs to the cyclic nucleotide phosphodiesterase family. PDE1 subfamily. In terms of assembly, homodimer. It depends on Zn(2+) as a cofactor. Mg(2+) is required as a cofactor. As to expression, highly expressed in olfactory epithelium and at moderate levels, in cerebellum, as well as weakly in forebrain, testis, heart and lung. In the olfactory epithelium, expressed by sensory neurons, but not epithelial cells.

The protein localises to the lysosome. It catalyses the reaction a nucleoside 3',5'-cyclic phosphate + H2O = a nucleoside 5'-phosphate + H(+). The enzyme catalyses 3',5'-cyclic GMP + H2O = GMP + H(+). The catalysed reaction is 3',5'-cyclic AMP + H2O = AMP + H(+). Its activity is regulated as follows. Type I PDE are activated by the binding of calmodulin in the presence of Ca(2+). Functionally, calmodulin-dependent cyclic nucleotide phosphodiesterase with a dual specificity for the second messengers cAMP and cGMP, which are key regulators of many important physiological processes. Has a high affinity for both cAMP and cGMP. Modulates the amplitude and duration of the cAMP signal in sensory cilia in response to odorant stimulation, hence contributing to the generation of action potentials. Regulates smooth muscle cell proliferation. Regulates the stability of growth factor receptors, including PDGFRB. The protein is Dual specificity calcium/calmodulin-dependent 3',5'-cyclic nucleotide phosphodiesterase 1C of Rattus norvegicus (Rat).